The sequence spans 308 residues: Oxygen-dependent coproporphyrinogen-III oxidase (308 aa).

Serine 100 lines the substrate pocket. Residues histidine 104 and histidine 114 each coordinate a divalent metal cation. Catalysis depends on histidine 114, which acts as the Proton donor. Position 116 to 118 (116 to 118 (NFR)) interacts with substrate. Positions 153 and 183 each coordinate a divalent metal cation. Positions 248–283 (YVEFNLVFDRGTIFGLQSGGRTESILSSMPPMATWK) are important for dimerization. Residue 266–268 (GGR) coordinates substrate.

The protein belongs to the aerobic coproporphyrinogen-III oxidase family. In terms of assembly, homodimer. A divalent metal cation is required as a cofactor.

It localises to the cytoplasm. The catalysed reaction is coproporphyrinogen III + O2 + 2 H(+) = protoporphyrinogen IX + 2 CO2 + 2 H2O. The protein operates within porphyrin-containing compound metabolism; protoporphyrin-IX biosynthesis; protoporphyrinogen-IX from coproporphyrinogen-III (O2 route): step 1/1. Its function is as follows. Involved in the heme biosynthesis. Catalyzes the aerobic oxidative decarboxylation of propionate groups of rings A and B of coproporphyrinogen-III to yield the vinyl groups in protoporphyrinogen-IX. This Francisella tularensis subsp. holarctica (strain OSU18) protein is Oxygen-dependent coproporphyrinogen-III oxidase.